The primary structure comprises 210 residues: N-(5'-phosphoribosyl)anthranilate isomerase (210 aa).

It belongs to the TrpF family.

The catalysed reaction is N-(5-phospho-beta-D-ribosyl)anthranilate = 1-(2-carboxyphenylamino)-1-deoxy-D-ribulose 5-phosphate. Its pathway is amino-acid biosynthesis; L-tryptophan biosynthesis; L-tryptophan from chorismate: step 3/5. The polypeptide is N-(5'-phosphoribosyl)anthranilate isomerase (Methanococcus aeolicus (strain ATCC BAA-1280 / DSM 17508 / OCM 812 / Nankai-3)).